Consider the following 594-residue polypeptide: Laccase-2 (594 aa).

The signal sequence occupies residues 1-20 (MGGIIKLSFLFCSLISLVNS). Asn67 is a glycosylation site (N-linked (GlcNAc...) asparagine). Plastocyanin-like domains follow at residues 70 to 183 (EALA…HSPN) and 195 to 357 (DRIV…RYTG). Residues His117 and His119 each coordinate Cu cation. Asn124 is a glycosylation site (N-linked (GlcNAc...) asparagine). A disulfide bridge connects residues Cys138 and Cys578. Positions 162 and 164 each coordinate Cu cation. Residues Asn242, Asn286, Asn320, Asn358, Asn397, Asn430, Asn452, and Asn458 are each glycosylated (N-linked (GlcNAc...) asparagine). Residues 466–563 (PVNIIINNLD…KMAVVVVQPE (98 aa)) form the Plastocyanin-like 3 domain. Cu cation contacts are provided by His480, His483, and His485. An N-linked (GlcNAc...) asparagine glycan is attached at Asn508. The Cu cation site is built by His543, Cys544, His545, and His549.

This sequence belongs to the multicopper oxidase family. It depends on Cu cation as a cofactor.

Its subcellular location is the secreted. The protein resides in the cell wall. It catalyses the reaction 4 hydroquinone + O2 = 4 benzosemiquinone + 2 H2O. In terms of biological role, laccase that catalyzes the oxidation of certain aromatic compounds, including L-dopa, to quinones, which then polymerize to melanin. Able to oxidize a wide variety of aromatic diphenol and diamino groups in the ortho, meta, and para positions but not monophenolic groups such as in phenol, tyramine, or tyrosine. Plays an important role in virulence. Plays a role in dissemination to extrapulmonary sites but is not involved in pulmonary growth or in elicitation of cellular immune responses in the lung. This chain is Laccase-2 (LAC2), found in Cryptococcus neoformans var. grubii serotype A (strain H99 / ATCC 208821 / CBS 10515 / FGSC 9487) (Filobasidiella neoformans var. grubii).